Here is a 545-residue protein sequence, read N- to C-terminus: Esterase-5B (545 aa).

An N-terminal signal peptide occupies residues 1–19 (MYCEKLILLLGCFWISSSA). An intrachain disulfide couples C84 to C103. N-linked (GlcNAc...) asparagine glycosylation is present at N113. Catalysis depends on S207, which acts as the Acyl-ester intermediate. C259 and C271 form a disulfide bridge. Residue N421 is glycosylated (N-linked (GlcNAc...) asparagine). H467 acts as the Charge relay system in catalysis. Residue N507 is glycosylated (N-linked (GlcNAc...) asparagine). C515 and C536 are joined by a disulfide.

This sequence belongs to the type-B carboxylesterase/lipase family. As to quaternary structure, homodimer.

The protein resides in the secreted. It catalyses the reaction a carboxylic ester + H2O = an alcohol + a carboxylate + H(+). The sequence is that of Esterase-5B (Est-5B) from Drosophila miranda (Fruit fly).